The following is a 542-amino-acid chain: Protein lin-9 homolog (542 aa).

Ala-2 carries the post-translational modification N-acetylalanine. Positions 2-296 (AELDQLPDES…QKQRPSRFFM (295 aa)) are sufficient for interaction with RB1. A Glycyl lysine isopeptide (Lys-Gly) (interchain with G-Cter in SUMO2) cross-link involves residue Lys-21. 2 positions are modified to phosphoserine: Ser-65 and Ser-95. Thr-96 and Thr-304 each carry phosphothreonine. Residues Ser-309 and Ser-321 each carry the phosphoserine modification. Residues 355–413 (IKKEHIKKLREMNTDAEKLKSYSMPISIEFQRRYATIVLELEQLNKDLNKVLHKVQQYC) are a coiled coil.

It belongs to the lin-9 family. As to quaternary structure, component of the DREAM complex (also named LINC complex) at least composed of E2F4, E2F5, LIN9, LIN37, LIN52, LIN54, MYBL1, MYBL2, RBL1, RBL2, RBBP4, TFDP1 and TFDP2. The complex exists in quiescent cells where it represses cell cycle-dependent genes. It dissociates in S phase when LIN9, LIN37, LIN52 and LIN54 form a subcomplex that binds to MYBL2. Interacts with RB1.

The protein localises to the nucleus. The protein resides in the nucleoplasm. Acts as a tumor suppressor. Inhibits DNA synthesis. Its ability to inhibit oncogenic transformation is mediated through its association with RB1. Plays a role in the expression of genes required for the G1/S transition. This Macaca fascicularis (Crab-eating macaque) protein is Protein lin-9 homolog (LIN9).